The primary structure comprises 194 residues: Peptidyl-tRNA hydrolase (194 aa).

A tRNA-binding site is contributed by Y17. H22 acts as the Proton acceptor in catalysis. Residues F68, N70, and N116 each coordinate tRNA.

Belongs to the PTH family. In terms of assembly, monomer.

Its subcellular location is the cytoplasm. The enzyme catalyses an N-acyl-L-alpha-aminoacyl-tRNA + H2O = an N-acyl-L-amino acid + a tRNA + H(+). In terms of biological role, hydrolyzes ribosome-free peptidyl-tRNAs (with 1 or more amino acids incorporated), which drop off the ribosome during protein synthesis, or as a result of ribosome stalling. Functionally, catalyzes the release of premature peptidyl moieties from peptidyl-tRNA molecules trapped in stalled 50S ribosomal subunits, and thus maintains levels of free tRNAs and 50S ribosomes. In Actinobacillus succinogenes (strain ATCC 55618 / DSM 22257 / CCUG 43843 / 130Z), this protein is Peptidyl-tRNA hydrolase.